The chain runs to 367 residues: Glutamate 5-kinase (367 aa).

Lys8 contacts ATP. The substrate site is built by Ser49, Asp136, and Asn148. ATP contacts are provided by residues 168 to 169 (TD) and 210 to 216 (TGGMATK). In terms of domain architecture, PUA spans 275 to 353 (TGKLYLDRGA…EEIPTILGYS (79 aa)).

It belongs to the glutamate 5-kinase family.

Its subcellular location is the cytoplasm. The enzyme catalyses L-glutamate + ATP = L-glutamyl 5-phosphate + ADP. It functions in the pathway amino-acid biosynthesis; L-proline biosynthesis; L-glutamate 5-semialdehyde from L-glutamate: step 1/2. Functionally, catalyzes the transfer of a phosphate group to glutamate to form L-glutamate 5-phosphate. The polypeptide is Glutamate 5-kinase (Cyanothece sp. (strain PCC 7425 / ATCC 29141)).